The sequence spans 333 residues: UDP-N-acetylglucosamine--N-acetylmuramyl-(pentapeptide) pyrophosphoryl-undecaprenol N-acetylglucosamine transferase (333 aa).

UDP-N-acetyl-alpha-D-glucosamine is bound by residues 10–12 (TGG), asparagine 124, serine 177, and glutamine 275.

The protein belongs to the glycosyltransferase 28 family. MurG subfamily.

It localises to the cell inner membrane. The catalysed reaction is di-trans,octa-cis-undecaprenyl diphospho-N-acetyl-alpha-D-muramoyl-L-alanyl-D-glutamyl-meso-2,6-diaminopimeloyl-D-alanyl-D-alanine + UDP-N-acetyl-alpha-D-glucosamine = di-trans,octa-cis-undecaprenyl diphospho-[N-acetyl-alpha-D-glucosaminyl-(1-&gt;4)]-N-acetyl-alpha-D-muramoyl-L-alanyl-D-glutamyl-meso-2,6-diaminopimeloyl-D-alanyl-D-alanine + UDP + H(+). The protein operates within cell wall biogenesis; peptidoglycan biosynthesis. Its function is as follows. Cell wall formation. Catalyzes the transfer of a GlcNAc subunit on undecaprenyl-pyrophosphoryl-MurNAc-pentapeptide (lipid intermediate I) to form undecaprenyl-pyrophosphoryl-MurNAc-(pentapeptide)GlcNAc (lipid intermediate II). This chain is UDP-N-acetylglucosamine--N-acetylmuramyl-(pentapeptide) pyrophosphoryl-undecaprenol N-acetylglucosamine transferase, found in Nitratiruptor sp. (strain SB155-2).